We begin with the raw amino-acid sequence, 795 residues long: Phenylalanine--tRNA ligase beta subunit (795 aa).

Residues 39-148 form the tRNA-binding domain; sequence AGVFDGVKVG…ENAPIGMDFR (110 aa). The B5 domain maps to 401-476; it reads PKPNQVALRR…RIYGYNNIPN (76 aa). Mg(2+) contacts are provided by aspartate 454, aspartate 460, glutamate 463, and glutamate 464. Positions 701–794 constitute an FDX-ACB domain; sequence SKFPANRRDI…VSAQFGAALR (94 aa).

This sequence belongs to the phenylalanyl-tRNA synthetase beta subunit family. Type 1 subfamily. As to quaternary structure, tetramer of two alpha and two beta subunits. Mg(2+) serves as cofactor.

Its subcellular location is the cytoplasm. The catalysed reaction is tRNA(Phe) + L-phenylalanine + ATP = L-phenylalanyl-tRNA(Phe) + AMP + diphosphate + H(+). This Vibrio cholerae serotype O1 (strain ATCC 39315 / El Tor Inaba N16961) protein is Phenylalanine--tRNA ligase beta subunit (pheT).